The following is a 179-amino-acid chain: Inner membrane-spanning protein YciB (179 aa).

A run of 5 helical transmembrane segments spans residues 22–42, 50–70, 76–96, 121–141, and 149–169; these read IYAA…YSWV, MALI…FFHN, WKVT…QWVM, LAWA…AFWL, and FKVF…GIYI.

Belongs to the YciB family.

It is found in the cell inner membrane. Functionally, plays a role in cell envelope biogenesis, maintenance of cell envelope integrity and membrane homeostasis. The chain is Inner membrane-spanning protein YciB from Shigella boydii serotype 4 (strain Sb227).